Here is a 223-residue protein sequence, read N- to C-terminus: GTP cyclohydrolase 1 (223 aa).

Positions 111, 114, and 182 each coordinate Zn(2+).

Belongs to the GTP cyclohydrolase I family. As to quaternary structure, homomer.

The enzyme catalyses GTP + H2O = 7,8-dihydroneopterin 3'-triphosphate + formate + H(+). The protein operates within cofactor biosynthesis; 7,8-dihydroneopterin triphosphate biosynthesis; 7,8-dihydroneopterin triphosphate from GTP: step 1/1. In Flavobacterium johnsoniae (strain ATCC 17061 / DSM 2064 / JCM 8514 / BCRC 14874 / CCUG 350202 / NBRC 14942 / NCIMB 11054 / UW101) (Cytophaga johnsonae), this protein is GTP cyclohydrolase 1.